The sequence spans 89 residues: Dolichol-phosphate mannose synthase subunit 3 (89 aa).

2 helical membrane passes run 7-27 (ILSL…AAII) and 33-53 (WLLP…MVGV).

This sequence belongs to the DPM3 family. In terms of assembly, component of the dolichol-phosphate mannose (DPM) synthase complex composed of DPMS1, DPMS2 and DPMS3; in the complex interacts directly with DPMS1 and DPMS2.

It is found in the endoplasmic reticulum membrane. Its pathway is protein modification; protein glycosylation. In terms of biological role, regulates the biosynthesis of dolichol phosphate-mannose. Regulatory subunit of the dolichol-phosphate mannose (DPM) synthase complex; essential for the ER localization and stable expression of DPMS1. The protein is Dolichol-phosphate mannose synthase subunit 3 of Arabidopsis thaliana (Mouse-ear cress).